We begin with the raw amino-acid sequence, 298 residues long: Bifunctional protein FolD (298 aa).

NADP(+) contacts are provided by residues 165–167 (GRS), S190, and I231.

Belongs to the tetrahydrofolate dehydrogenase/cyclohydrolase family. In terms of assembly, homodimer.

The catalysed reaction is (6R)-5,10-methylene-5,6,7,8-tetrahydrofolate + NADP(+) = (6R)-5,10-methenyltetrahydrofolate + NADPH. It carries out the reaction (6R)-5,10-methenyltetrahydrofolate + H2O = (6R)-10-formyltetrahydrofolate + H(+). It participates in one-carbon metabolism; tetrahydrofolate interconversion. Catalyzes the oxidation of 5,10-methylenetetrahydrofolate to 5,10-methenyltetrahydrofolate and then the hydrolysis of 5,10-methenyltetrahydrofolate to 10-formyltetrahydrofolate. In Prochlorococcus marinus subsp. pastoris (strain CCMP1986 / NIES-2087 / MED4), this protein is Bifunctional protein FolD.